Reading from the N-terminus, the 956-residue chain is Probable hypoxanthine oxidase XdhD (956 aa).

Mo-molybdopterin-binding residues include Q414, F445, and A727.

The protein belongs to the xanthine dehydrogenase family. It depends on [2Fe-2S] cluster as a cofactor. Requires Mo-molybdopterin as cofactor.

Its function is as follows. Probably has no xanthine dehydrogenase activity; however deletion results in increased adenine sensitivity, suggesting that this protein contributes to the conversion of adenine to guanine nucleotides during purine salvage. The chain is Probable hypoxanthine oxidase XdhD (xdhD) from Escherichia coli (strain K12).